Here is a 171-residue protein sequence, read N- to C-terminus: Co-chaperone protein HscB homolog (171 aa).

The J domain occupies N2–E74.

It belongs to the HscB family. As to quaternary structure, interacts with HscA and stimulates its ATPase activity.

In terms of biological role, co-chaperone involved in the maturation of iron-sulfur cluster-containing proteins. Seems to help targeting proteins to be folded toward HscA. The sequence is that of Co-chaperone protein HscB homolog from Aliivibrio fischeri (strain ATCC 700601 / ES114) (Vibrio fischeri).